We begin with the raw amino-acid sequence, 310 residues long: Inorganic pyrophosphatase, mitochondrial (310 aa).

The transit peptide at M1–N30 directs the protein to the mitochondrion. Positions 152, 157, and 189 each coordinate Mg(2+).

The protein belongs to the PPase family. In terms of assembly, homodimer that binds non-covalently to a protein complex in the inner mitochondrial membrane. It depends on Mg(2+) as a cofactor.

It is found in the mitochondrion. The catalysed reaction is diphosphate + H2O = 2 phosphate + H(+). Involved in energy production. Its activity is stimulated by uncouplers of ATP synthesis. This Saccharomyces cerevisiae (strain ATCC 204508 / S288c) (Baker's yeast) protein is Inorganic pyrophosphatase, mitochondrial (PPA2).